We begin with the raw amino-acid sequence, 494 residues long: Probable cytosol aminopeptidase (494 aa).

Residues lysine 260 and aspartate 265 each coordinate Mn(2+). The active site involves lysine 272. The Mn(2+) site is built by aspartate 283, aspartate 342, and glutamate 344. Arginine 346 is an active-site residue.

It belongs to the peptidase M17 family. Mn(2+) is required as a cofactor.

Its subcellular location is the cytoplasm. It carries out the reaction Release of an N-terminal amino acid, Xaa-|-Yaa-, in which Xaa is preferably Leu, but may be other amino acids including Pro although not Arg or Lys, and Yaa may be Pro. Amino acid amides and methyl esters are also readily hydrolyzed, but rates on arylamides are exceedingly low.. It catalyses the reaction Release of an N-terminal amino acid, preferentially leucine, but not glutamic or aspartic acids.. Functionally, presumably involved in the processing and regular turnover of intracellular proteins. Catalyzes the removal of unsubstituted N-terminal amino acids from various peptides. This Bacillus cereus (strain ATCC 14579 / DSM 31 / CCUG 7414 / JCM 2152 / NBRC 15305 / NCIMB 9373 / NCTC 2599 / NRRL B-3711) protein is Probable cytosol aminopeptidase.